We begin with the raw amino-acid sequence, 206 residues long: Endoribonuclease YbeY (206 aa).

A disordered region spans residues 1–20 (MSQANHNDTHNNIDDNINNH). Zn(2+)-binding residues include His168, His172, and His178.

The protein belongs to the endoribonuclease YbeY family. Zn(2+) serves as cofactor.

It localises to the cytoplasm. Its function is as follows. Single strand-specific metallo-endoribonuclease involved in late-stage 70S ribosome quality control and in maturation of the 3' terminus of the 16S rRNA. In Psychrobacter arcticus (strain DSM 17307 / VKM B-2377 / 273-4), this protein is Endoribonuclease YbeY.